The primary structure comprises 310 residues: MIDQLYRKAVLTVAERPQVEQLARQKMWNLAERFVAGESIESAIQAVQALERDGIAGNLDLLGEFIDSPAKCTEFADDVIKLIEAAHAAGIKPYVSIKLSSVGQGKDENGEDLGLTNARRIIAKAKEYGGFICLDMEDHTRVDVTLEQFRTLVGEFGAEHVGTVLQSYLYRSLGDRASLDDLRPNIRMVKGAYLEPATVAYPDKADVDQNYRRLVFQHLKAGNYTNVATHDERIIDDVKRFVLAHGIGKDAFEFQMLYGIRRDLQKQLAAEGYRVRVYLPYGRDWYAYFSRRIAETPRNAAFVVQGMLKG.

Residue Lys98 participates in substrate binding. The active site involves Asp135. Residues Met136, Gln166, 187-192, 229-230, and 292-295 contribute to the FAD site; these read RMVKGA, TH, and RIAE. Residue Arg187 is part of the active site. Position 291-292 (291-292) interacts with substrate; that stretch reads RR.

The protein belongs to the proline dehydrogenase family. FAD is required as a cofactor.

The catalysed reaction is L-proline + a quinone = (S)-1-pyrroline-5-carboxylate + a quinol + H(+). Its pathway is amino-acid degradation; L-proline degradation into L-glutamate; L-glutamate from L-proline: step 1/2. Functionally, converts proline to delta-1-pyrroline-5-carboxylate. The polypeptide is Proline dehydrogenase (Deinococcus radiodurans (strain ATCC 13939 / DSM 20539 / JCM 16871 / CCUG 27074 / LMG 4051 / NBRC 15346 / NCIMB 9279 / VKM B-1422 / R1)).